A 510-amino-acid chain; its full sequence is uncharacterized protein (510 aa).

Disordered regions lie at residues 1–154 (MGSP…ATFL), 208–227 (DGNHGNQAKNSGPAETGDLA), 234–276 (TRES…QGIL), and 368–480 (NFYT…GCPR). Ser-43 bears the Phosphoserine mark. Polar residues predominate over residues 50–60 (PLVSQQDTSEA). A compositionally biased stretch (basic and acidic residues) spans 78-92 (EEERLGSPEDEKMDG). Phosphoserine is present on Ser-84. 2 stretches are compositionally biased toward polar residues: residues 97–109 (SQPSVETEQQVAN) and 118–135 (QPSSESFCAETETGSNRR). Ser-120 bears the Phosphoserine mark. Low complexity predominate over residues 139-151 (ASGSEEAKAASAA). Over residues 243–255 (SSLLTTTRGLTSG) the composition is skewed to low complexity. Over residues 379-395 (RTKELQLVAKEDTDSTR) the composition is skewed to basic and acidic residues. Residues 414-441 (SVHQEFSSGDINTRSLQDPGNSQSSGLS) are compositionally biased toward polar residues.

This is an uncharacterized protein from Rattus norvegicus (Rat).